The following is a 208-amino-acid chain: Thymidylate kinase (208 aa).

Residue 10-17 (GPEGSGKT) coordinates ATP.

It belongs to the thymidylate kinase family.

The catalysed reaction is dTMP + ATP = dTDP + ADP. Phosphorylation of dTMP to form dTDP in both de novo and salvage pathways of dTTP synthesis. In Bacillus anthracis, this protein is Thymidylate kinase.